The primary structure comprises 147 residues: Ribosomal RNA large subunit methyltransferase H (147 aa).

S-adenosyl-L-methionine contacts are provided by residues Leu66, Gly95, and 114–119; that span reads LSELTF.

Belongs to the RNA methyltransferase RlmH family. In terms of assembly, homodimer.

The protein localises to the cytoplasm. The catalysed reaction is pseudouridine(1915) in 23S rRNA + S-adenosyl-L-methionine = N(3)-methylpseudouridine(1915) in 23S rRNA + S-adenosyl-L-homocysteine + H(+). Specifically methylates the pseudouridine at position 1915 (m3Psi1915) in 23S rRNA. The polypeptide is Ribosomal RNA large subunit methyltransferase H (Synechococcus sp. (strain RCC307)).